The primary structure comprises 83 residues: Protein WFDC9 (83 aa).

An N-terminal signal peptide occupies residues 1–24 (MKPWIIVLTVSAHGILVFLHVLGS).

It is found in the secreted. This chain is Protein WFDC9 (Wfdc9), found in Mus musculus (Mouse).